A 462-amino-acid polypeptide reads, in one-letter code: ATP synthase subunit beta (462 aa).

151–158 (GGAGVGKT) contributes to the ATP binding site.

Belongs to the ATPase alpha/beta chains family. F-type ATPases have 2 components, CF(1) - the catalytic core - and CF(0) - the membrane proton channel. CF(1) has five subunits: alpha(3), beta(3), gamma(1), delta(1), epsilon(1). CF(0) has four main subunits: a(1), b(1), b'(1) and c(9-12).

The protein localises to the cell inner membrane. It carries out the reaction ATP + H2O + 4 H(+)(in) = ADP + phosphate + 5 H(+)(out). Functionally, produces ATP from ADP in the presence of a proton gradient across the membrane. The catalytic sites are hosted primarily by the beta subunits. In Pelodictyon phaeoclathratiforme (strain DSM 5477 / BU-1), this protein is ATP synthase subunit beta.